The following is a 189-amino-acid chain: Large ribosomal subunit protein bL25 (189 aa).

Belongs to the bacterial ribosomal protein bL25 family. CTC subfamily. Part of the 50S ribosomal subunit; part of the 5S rRNA/L5/L18/L25 subcomplex. Contacts the 5S rRNA. Binds to the 5S rRNA independently of L5 and L18.

In terms of biological role, this is one of the proteins that binds to the 5S RNA in the ribosome where it forms part of the central protuberance. The polypeptide is Large ribosomal subunit protein bL25 (Azobacteroides pseudotrichonymphae genomovar. CFP2).